The sequence spans 621 residues: Chaperone protein HtpG (621 aa).

The segment at 1-341 is a; substrate-binding; sequence MSNQEYTFQT…SEDLPLNVSR (341 aa). Residues 342–547 form a b region; that stretch reads EILQQNKILA…GDEQNAMMAN (206 aa). Positions 548–621 are c; sequence FMRQMGQSVP…RLNSVLLKAL (74 aa).

Belongs to the heat shock protein 90 family. In terms of assembly, homodimer.

It localises to the cytoplasm. In terms of biological role, molecular chaperone. Has ATPase activity. This chain is Chaperone protein HtpG, found in Helicobacter pylori (strain HPAG1).